The sequence spans 593 residues: Proteasome-associated ATPase (593 aa).

The stretch at 5 to 94 forms a coiled coil; the sequence is DDADSRAARW…KEEIDRLAQP (90 aa). ATP is bound at residue 281–286; the sequence is GCGKTL. The disordered stretch occupies residues 574-593; that stretch reads GKGADAGRSIETASNTGQYL. Polar residues predominate over residues 584–593; sequence ETASNTGQYL. Positions 592-593 are docks into pockets in the proteasome alpha-ring; sequence YL.

Belongs to the AAA ATPase family. In terms of assembly, homohexamer. Assembles into a hexameric ring structure that caps the 20S proteasome core. Strongly interacts with the prokaryotic ubiquitin-like protein Pup through a hydrophobic interface; the interacting region of ARC lies in its N-terminal coiled-coil domain. There is one Pup binding site per ARC hexamer ring. Upon ATP-binding, the C-terminus of ARC interacts with the alpha-rings of the proteasome core, possibly by binding to the intersubunit pockets.

Its pathway is protein degradation; proteasomal Pup-dependent pathway. Its function is as follows. ATPase which is responsible for recognizing, binding, unfolding and translocation of pupylated proteins into the bacterial 20S proteasome core particle. May be essential for opening the gate of the 20S proteasome via an interaction with its C-terminus, thereby allowing substrate entry and access to the site of proteolysis. Thus, the C-termini of the proteasomal ATPase may function like a 'key in a lock' to induce gate opening and therefore regulate proteolysis. The chain is Proteasome-associated ATPase from Salinispora arenicola (strain CNS-205).